Here is a 68-residue protein sequence, read N- to C-terminus: Beta-defensin 1 (68 aa).

A signal peptide spans 1-21; the sequence is MRTSYLLLFTLCLLLSEMASG. Residues 22–32 constitute a propeptide that is removed on maturation; sequence DNFLTGLGHRS. Intrachain disulfides connect C37/C66, C44/C59, and C49/C67.

Belongs to the beta-defensin family. In terms of assembly, monomer. Homodimer.

The protein resides in the secreted. It is found in the membrane. Its function is as follows. Has bactericidal activity. May act as a ligand for C-C chemokine receptor CCR6. Positively regulates the sperm motility and bactericidal activity in a CCR6-dependent manner. Binds to CCR6 and triggers Ca2+ mobilization in the sperm which is important for its motility. This Macaca mulatta (Rhesus macaque) protein is Beta-defensin 1 (DEFB1).